The sequence spans 223 residues: Superoxide dismutase [Mn], mitochondrial (223 aa).

The N-terminal 24 residues, 1–24, are a transit peptide targeting the mitochondrion; sequence MNLIIGVAGRLLVGKNYCLNTQRL. Residues histidine 50, histidine 98, aspartate 184, and histidine 188 each coordinate Mn(2+).

The protein belongs to the iron/manganese superoxide dismutase family. As to quaternary structure, homotetramer. The cofactor is Mn(2+).

It localises to the mitochondrion matrix. It catalyses the reaction 2 superoxide + 2 H(+) = H2O2 + O2. Functionally, destroys superoxide anion radicals which are normally produced within the cells and which are toxic to biological systems. In Onchocerca volvulus, this protein is Superoxide dismutase [Mn], mitochondrial (sod-2).